Reading from the N-terminus, the 737-residue chain is Relaxin receptor 2 (737 aa).

The Extracellular segment spans residues 1–399 (MFPLLHFIVL…SSFEDLLANN (399 aa)). Residues 27–64 (LCQKGYFPCGNLTKCLPRAFHCDGVDDCGNGADEDNCG) form the LDL-receptor class A domain. Cystine bridges form between C28/C41, C35/C54, and C48/C63. N37 carries N-linked (GlcNAc...) asparagine glycosylation. N121 is a glycosylation site (N-linked (GlcNAc...) asparagine). 10 LRR repeats span residues 121–142 (NTTLLSLKKNKIHSLPDKVFTK), 145–166 (QLKQIFLQHNCITHISRKAFFG), 169–190 (NLQILYLSHNCITTLRPGVFKD), 193–214 (QLTWLILDDNPITRISQQLFTG), 217–238 (SLFFLSMVNNYLEALPKQMCAQ), 241–262 (QLNWMDLEGNGIKYLTNSSFLS), 265–286 (SLTVLFLPRNQIDFVPEKTFSS), 289–310 (NLGELDLSSNMIMELPPEIFKD), 313–334 (LLQKLNLSSNPLLYLHKNQFES), and 337–358 (QLQSLDLERIEIPNINTRMFQP). Residue N257 is glycosylated (N-linked (GlcNAc...) asparagine). N-linked (GlcNAc...) asparagine glycosylation is present at N318. N361 carries an N-linked (GlcNAc...) asparagine glycan. Residues 400 to 420 (ILRIFVWVIAFITCFGNLFVI) traverse the membrane as a helical segment. Residues 421-438 (GMRSFIKAENTTHATSIK) lie on the Cytoplasmic side of the membrane. The chain crosses the membrane as a helical span at residues 439 to 459 (ILCCADCLMGVYLFFIGFFDI). At 460–478 (KYRGQYQKYALLWMESLQC) the chain is on the extracellular side. An intrachain disulfide couples C478 to C556. The chain crosses the membrane as a helical span at residues 479 to 501 (RLMGFLAMLSTEVSVLLLTYLTL). Topologically, residues 502–520 (EKFLAIVFPFSNIRPGKWQ) are cytoplasmic. Residues 521 to 541 (TMVILICIWIVGFLIAVIPFW) form a helical membrane-spanning segment. Residues 542–575 (KEDYFGNFYGKNGVCFPLYYDQTEDIGSKGYSLG) are Extracellular-facing. Residues 576–596 (IFLGVNLLAFLIIVFSYTIMF) traverse the membrane as a helical segment. Residues 597 to 622 (CSIKKTALQTSEVRNPIGREVAVANR) lie on the Cytoplasmic side of the membrane. The chain crosses the membrane as a helical span at residues 623–643 (FFFIVFSDAICWIPVFVIKIL). Residues 644–653 (SLFRVEIPGT) are Extracellular-facing. The helical transmembrane segment at 654–674 (ITSWIVIFFLPVNSALNPILY) threads the bilayer. The Cytoplasmic segment spans residues 675–737 (TLTTSFFKDK…LGDSIVKPIS (63 aa)).

Belongs to the G-protein coupled receptor 1 family.

The protein localises to the cell membrane. Its function is as follows. Receptor for relaxin. The activity of this receptor is mediated by G proteins leading to stimulation of adenylate cyclase and an increase of cAMP. May also be a receptor for Leydig insulin-like peptide (INSL3). The polypeptide is Relaxin receptor 2 (RXFP2) (Canis lupus familiaris (Dog)).